The chain runs to 219 residues: Abasic site processing protein YobE (219 aa).

C2 functions as the Nucleophile in the catalytic mechanism. C2 carries the post-translational modification Thiazolidine linkage to a ring-opened DNA abasic site. The active site involves E106.

This sequence belongs to the SOS response-associated peptidase family.

Its activity is regulated as follows. Formation and reversal of DNA-protein cross-link depends on DNA context. Catalyzes formation of the thiazolidine linkage in presence of abasic sites in single-stranded DNA. Mediates the reversal of the thiazolidine cross-link in presence of double stranded DNA. In terms of biological role, sensor of abasic sites in single-stranded DNA (ssDNA) required to preserve genome integrity by promoting error-free repair of abasic sites. Recognizes and binds abasic sites in ssDNA at replication forks and chemically modifies the lesion by forming a covalent cross-link with DNA: forms a stable thiazolidine linkage between a ring-opened abasic site and the alpha-amino and sulfhydryl substituents of its N-terminal catalytic cysteine residue. The DNA-protein cross-link is then reversed: able to catalyze the reversal of the thiazolidine cross-link and cycle between a cross-link and a non-cross-linked state depending on DNA context: mediates self-reversal of the thiazolidine cross-link in double stranded DNA. May act as a protease: mediates autocatalytic processing of its N-terminal methionine in order to expose the catalytic cysteine. This chain is Abasic site processing protein YobE (yobE), found in Bacillus subtilis (strain 168).